A 188-amino-acid chain; its full sequence is dCTP deaminase (188 aa).

DCTP is bound at residue 109 to 114; that stretch reads KSTYAR. Glu135 serves as the catalytic Proton donor/acceptor. Residues Gln154, Tyr168, and Gln178 each coordinate dCTP.

This sequence belongs to the dCTP deaminase family. In terms of assembly, homotrimer.

It carries out the reaction dCTP + H2O + H(+) = dUTP + NH4(+). Its pathway is pyrimidine metabolism; dUMP biosynthesis; dUMP from dCTP (dUTP route): step 1/2. Catalyzes the deamination of dCTP to dUTP. This is dCTP deaminase from Helicobacter acinonychis (strain Sheeba).